The sequence spans 412 residues: [Pyruvate dehydrogenase (acetyl-transferring)] kinase isozyme 4, mitochondrial (412 aa).

The Histidine kinase domain maps to 138–368 (ILEYKDTCTV…DAIIYLKALS (231 aa)). ATP-binding positions include 254 to 261 (ELFKNAMR), Asp293, 312 to 313 (ST), and 329 to 334 (GFGYGL).

This sequence belongs to the PDK/BCKDK protein kinase family. Homodimer. Interacts with the pyruvate dehydrogenase complex subunit DLAT, and is part of the multimeric pyruvate dehydrogenase complex that contains multiple copies of pyruvate dehydrogenase (E1), dihydrolipoamide acetyltransferase (DLAT, E2) and lipoamide dehydrogenase (DLD, E3).

It localises to the mitochondrion matrix. The enzyme catalyses L-seryl-[pyruvate dehydrogenase E1 alpha subunit] + ATP = O-phospho-L-seryl-[pyruvate dehydrogenase E1 alpha subunit] + ADP + H(+). In terms of biological role, kinase that plays a key role in regulation of glucose and fatty acid metabolism and homeostasis via phosphorylation of the pyruvate dehydrogenase subunits PDHA1 and PDHA2. This inhibits pyruvate dehydrogenase activity, and thereby regulates metabolite flux through the tricarboxylic acid cycle, down-regulates aerobic respiration and inhibits the formation of acetyl-coenzyme A from pyruvate. Inhibition of pyruvate dehydrogenase decreases glucose utilization and increases fat metabolism in response to prolonged fasting and starvation. Plays an important role in maintaining normal blood glucose levels under starvation, and is involved in the insulin signaling cascade. Via its regulation of pyruvate dehydrogenase activity, plays an important role in maintaining normal blood pH and in preventing the accumulation of ketone bodies under starvation. In the fed state, mediates cellular responses to glucose levels and to a high-fat diet. Regulates both fatty acid oxidation and de novo fatty acid biosynthesis. Plays a role in the generation of reactive oxygen species. Protects detached epithelial cells against anoikis. Plays a role in cell proliferation via its role in regulating carbohydrate and fatty acid metabolism. This is [Pyruvate dehydrogenase (acetyl-transferring)] kinase isozyme 4, mitochondrial (Pdk4) from Mus musculus (Mouse).